The sequence spans 950 residues: MPVRRGHVAPQNTYLDTIIRKFEGQSRKFLIANAQMENCAIIYCNDGFCELFGYSRVEVMQRPCTCDFLTGPNTPSSAVSRLAQALLGAEECKVDILYYRKDASSFRCLVDVVPVKNEDGAVIMFILNFEDLAQLLAKSSSRSLTQRLLSHSFLGSEGSHSRPSGQGPGPGRGKYRTVSQIPQFTLNFVEFNLEKHRSGSTTEIEIIAPHKVVERTQNVTEKVTQVLSLGADVLPEYKLQAPRIHRGTILHYSPFKAVWDWLILLLVIYTAVFTPYSAAFLLSDQDESQRGTCGYTCSPLTVVDLIVDIMFVVDIVINFRTTYVNTNDEVVSHPRRIAVHYFKGWFLIDMVAAIPFDLLIFRTGSDETTTLIGLLKTARLLRLVRVARKLDRYSEYGAAVLFLLMCTFALIAHWLACIWYAIGNVERPYLEPKIGWLDSLGAQLGKQYNGSDPASGPSVQDKYVTALYFTFSSLTSVGFGNVSPNTNSEKVFSICVMLIGSLMYASIFGNVSAIIQRLYSGTARYHTQMLRVKEFIRFHQIPNPLRQRLEEYFQHAWSYTNGIDMNAVLKGFPECLQADICLHLHRALLQHCPAFRGASKGCLRALAVKFKTTHAPPGDTLVHLGDVLSTLYFISRGSIEILRDDVVVAILGKNDIFGEPASLHARPGKSSADVRALTYCDLHKIHRADLLEVLDMYPAFADTFWNKLEVTFNLRDADGGLQSTPRQAPGHQDPQGFFLNDSQSGAAPSLSISDTSALWPELLQQMPPSPPNPRQDLDCWHRELGFKLEQLQAQMNRLESRVSSDLSRILQLLQHPQGRPSYILGASASSDLASFPETSVTRSSESTLLVGHVPSAQTLSYGDLDDHIQTPRNFSPRTPHVAMAMDKTLVPSSEQEQPGGLLSPLASPLRPLEVPGLGGSRFPSLPEHLSSVPKQLEFQRHGSDPGFTRS.

Topologically, residues 1 to 261 are cytoplasmic; that stretch reads MPVRRGHVAP…YSPFKAVWDW (261 aa). One can recognise a PAS domain in the interval 41-70; sequence IIYCNDGFCELFGYSRVEVMQRPCTCDFLT. The PAC domain occupies 92 to 144; that stretch reads CKVDILYYRKDASSFRCLVDVVPVKNEDGAVIMFILNFEDLAQLLAKSSSRSL. The segment at 154 to 174 is disordered; it reads LGSEGSHSRPSGQGPGPGRGK. A helical membrane pass occupies residues 262–282; the sequence is LILLLVIYTAVFTPYSAAFLL. The Extracellular segment spans residues 283–298; the sequence is SDQDESQRGTCGYTCS. Residues 299–319 form a helical membrane-spanning segment; sequence PLTVVDLIVDIMFVVDIVINF. The Cytoplasmic segment spans residues 320–340; the sequence is RTTYVNTNDEVVSHPRRIAVH. The helical transmembrane segment at 341–361 threads the bilayer; sequence YFKGWFLIDMVAAIPFDLLIF. Topologically, residues 362 to 370 are extracellular; sequence RTGSDETTT. A helical; Voltage-sensor transmembrane segment spans residues 371 to 391; the sequence is LIGLLKTARLLRLVRVARKLD. Over 392-398 the chain is Cytoplasmic; sequence RYSEYGA. Residues 399–419 form a helical membrane-spanning segment; it reads AVLFLLMCTFALIAHWLACIW. Over 420–463 the chain is Extracellular; it reads YAIGNVERPYLEPKIGWLDSLGAQLGKQYNGSDPASGPSVQDKY. The segment at residues 464 to 484 is an intramembrane region (pore-forming); that stretch reads VTALYFTFSSLTSVGFGNVSP. The Selectivity filter motif lies at 476–481; it reads SVGFGN. Residues 485–490 are Extracellular-facing; that stretch reads NTNSEK. The helical transmembrane segment at 491 to 511 threads the bilayer; sequence VFSICVMLIGSLMYASIFGNV. The Cytoplasmic portion of the chain corresponds to 512–950; that stretch reads SAIIQRLYSG…HGSDPGFTRS (439 aa). The segment at 594-694 is cNMP-binding domain; that stretch reads AFRGASKGCL…IHRADLLEVL (101 aa). Disordered regions lie at residues 719 to 750 and 890 to 950; these read GGLQ…APSL and VPSS…FTRS. Over residues 740 to 750 the composition is skewed to polar residues; that stretch reads NDSQSGAAPSL. Over residues 898–912 the composition is skewed to low complexity; that stretch reads PGGLLSPLASPLRPL.

The protein belongs to the potassium channel family. H (Eag) (TC 1.A.1.20) subfamily. Kv11.2/KCNH6 sub-subfamily. The potassium channel is probably composed of a homo- or heterotetrameric complex of pore-forming alpha subunits that can associate only within their subfamily. As to expression, highly expressed in celiac and superior mesenteric ganglia, but not detected in brain or in heart. Detected at low levels in retina. Also found in pituitary. Also found in the olfactory bulb (granular and mitral cell layers).

It localises to the cell membrane. It catalyses the reaction K(+)(in) = K(+)(out). Pore-forming (alpha) subunit of voltage-gated inwardly rectifying potassium channel. Characterized by unusual gating kinetics by producing relatively small outward currents during membrane depolarization and large inward currents during subsequent repolarization which reflect a rapid inactivation during depolarization and quick recovery from inactivation but slow deactivation (closing) during repolarization. Activates even more slowly than KCNH2. In Rattus norvegicus (Rat), this protein is Voltage-gated inwardly rectifying potassium channel KCNH6.